A 627-amino-acid chain; its full sequence is MIYDYGYDVIVVGGGHAGVEAASASARIGAKTLLLTHNIDTIGQMSCNPAIGGIGKGHLVKEIDAMGGVMAKAIDMAGIQFRILNSRKGPAVRATRAQADRLLYKKAINSLINNQENLDIFQDSVDDLVVENNTVCGAITKTGITFRAKKVVLTVGTFLGGKIHIGKVSNAGGRAGDQPSNALAARLRSLPFRVDRLKTGTPPRIDRRSVDFSVMEVQHGDNPTPYFSFFSKGKIEHPRQIPCYITYTNNETHKIITDNLDKSAMYSGLIEGIGPRYCPSIEDKVVRFADKERHQIFVEPEGLNSIELYPNGLSTSLPFEVQCNYIRSIKGFEKAFIMRPGYAIEYDFFDPRDLKPTLETKHIKNLYFAGQINGTTGYEEAGAQGLVASINAAISIDSDKSWYPTRADSYIGVLIDDLITKGTKEPYRMFTSRAEYRLILREDNADLRLSDKACELGLLSKEDQQHFISKKNAIIENIAMMKNTWIGPQTQKARDLEKFLDKKMTRESTLFDLLKRPEIDYSKLQQISELNLNLQDDAVIEQIEISAKYSGYIERQNKDIEKTATLEQKAIPTDFNYSQVKGLSNEVLQKLTEQKPTTLGEASRIPGITPAAISLLTIYMKKTGFIK.

FAD contacts are provided by residues 13-18 (GGGHAG), Val-125, and Ser-180. 274–288 (GPRYCPSIEDKVVRF) lines the NAD(+) pocket. Position 371 (Gln-371) interacts with FAD.

It belongs to the MnmG family. Homodimer. Heterotetramer of two MnmE and two MnmG subunits. FAD serves as cofactor.

Its subcellular location is the cytoplasm. In terms of biological role, NAD-binding protein involved in the addition of a carboxymethylaminomethyl (cmnm) group at the wobble position (U34) of certain tRNAs, forming tRNA-cmnm(5)s(2)U34. The protein is tRNA uridine 5-carboxymethylaminomethyl modification enzyme MnmG of Francisella tularensis subsp. tularensis (strain WY96-3418).